Reading from the N-terminus, the 120-residue chain is Ribosome-binding factor A (120 aa).

Belongs to the RbfA family. Monomer. Binds 30S ribosomal subunits, but not 50S ribosomal subunits or 70S ribosomes.

It localises to the cytoplasm. In terms of biological role, one of several proteins that assist in the late maturation steps of the functional core of the 30S ribosomal subunit. Associates with free 30S ribosomal subunits (but not with 30S subunits that are part of 70S ribosomes or polysomes). Required for efficient processing of 16S rRNA. May interact with the 5'-terminal helix region of 16S rRNA. In Clostridium botulinum (strain Loch Maree / Type A3), this protein is Ribosome-binding factor A.